Reading from the N-terminus, the 797-residue chain is Protocadherin beta-11 (797 aa).

The N-terminal stretch at 1–26 (MENGGTRTQQIRQVLLLFVLLGMSQA) is a signal peptide. At 27-690 (GSETWSFSVA…AQTDFLTVYL (664 aa)) the chain is on the extracellular side. 5 Cadherin domains span residues 35–133 (VAEE…SPIF), 138–242 (MLLE…SPEF), 247–347 (YEVK…APEI), 352–451 (ITSP…APTF), and 456–561 (YTLF…SPFV). N-linked (GlcNAc...) asparagine glycosylation is found at asparagine 418, asparagine 436, asparagine 487, and asparagine 567. A Cadherin 6 domain is found at 568 to 671 (GSAPCTELVP…LVDGFSQPFL (104 aa)). The chain crosses the membrane as a helical span at residues 691 to 711 (VVALASVSSLFFFSVLLFVAV). Residues 712-797 (RLCRRSRAAS…TFQNSFGFNF (86 aa)) are Cytoplasmic-facing.

It localises to the cell membrane. Its function is as follows. Potential calcium-dependent cell-adhesion protein. May be involved in the establishment and maintenance of specific neuronal connections in the brain. In Pan troglodytes (Chimpanzee), this protein is Protocadherin beta-11 (PCDHB11).